A 712-amino-acid polypeptide reads, in one-letter code: NURS complex subunit red1 (712 aa).

Residues Met1 to Glu22 are compositionally biased toward basic and acidic residues. Disordered regions lie at residues Met1–Pro71, Asn107–Gln195, and Asp323–Met348. Positions Ile5–Glu32 form a coiled coil. Acidic residues predominate over residues Glu23–Val42. Low complexity predominate over residues Ser130–Ser141. Polar residues-rich tracts occupy residues Phe178 to Thr193 and Asn327 to Met348. A coiled-coil region spans residues Ser351 to Lys379. Residues Pro428–Thr447 form a disordered region. Positions Ala471–Ser501 form a coiled coil. The segment covering Gln545–Glu567 has biased composition (polar residues). The segment at Gln545–Thr568 is disordered. The C3H1-type zinc finger occupies Phe618–Arg639.

Interacts with mmi1, pla1 and rrp6.

It is found in the nucleus. Promotes the exosome-mediated degradation of mRNAs containing a DSR (determinant of selective removal) signal sequence from mitotic cells. The sequence is that of NURS complex subunit red1 from Schizosaccharomyces pombe (strain 972 / ATCC 24843) (Fission yeast).